A 211-amino-acid chain; its full sequence is ATP phosphoribosyltransferase (211 aa).

It belongs to the ATP phosphoribosyltransferase family. Short subfamily. In terms of assembly, heteromultimer composed of HisG and HisZ subunits.

Its subcellular location is the cytoplasm. It carries out the reaction 1-(5-phospho-beta-D-ribosyl)-ATP + diphosphate = 5-phospho-alpha-D-ribose 1-diphosphate + ATP. Its pathway is amino-acid biosynthesis; L-histidine biosynthesis; L-histidine from 5-phospho-alpha-D-ribose 1-diphosphate: step 1/9. Catalyzes the condensation of ATP and 5-phosphoribose 1-diphosphate to form N'-(5'-phosphoribosyl)-ATP (PR-ATP). Has a crucial role in the pathway because the rate of histidine biosynthesis seems to be controlled primarily by regulation of HisG enzymatic activity. The polypeptide is ATP phosphoribosyltransferase (hisG) (Pseudomonas aeruginosa (strain ATCC 15692 / DSM 22644 / CIP 104116 / JCM 14847 / LMG 12228 / 1C / PRS 101 / PAO1)).